The following is a 108-amino-acid chain: uncharacterized protein (108 aa).

3 helical membrane-spanning segments follow: residues 36–56, 58–78, and 88–108; these read LAIM…DKMI, FIFV…KLLF, and IVFL…FFNL.

It localises to the cell membrane. This is an uncharacterized protein from Alkalihalophilus pseudofirmus (strain ATCC BAA-2126 / JCM 17055 / OF4) (Bacillus pseudofirmus).